A 139-amino-acid chain; its full sequence is Aspartate 1-decarboxylase (139 aa).

Ser-25 acts as the Schiff-base intermediate with substrate; via pyruvic acid in catalysis. A Pyruvic acid (Ser) modification is found at Ser-25. Thr-57 contributes to the substrate binding site. Tyr-58 acts as the Proton donor in catalysis. 73–75 (GAA) provides a ligand contact to substrate. The disordered stretch occupies residues 117-139 (LGADPAEPVPGSDQARSPQAVTA). Positions 130–139 (QARSPQAVTA) are enriched in polar residues.

This sequence belongs to the PanD family. Heterooctamer of four alpha and four beta subunits. Requires pyruvate as cofactor. Is synthesized initially as an inactive proenzyme, which is activated by self-cleavage at a specific serine bond to produce a beta-subunit with a hydroxyl group at its C-terminus and an alpha-subunit with a pyruvoyl group at its N-terminus.

It localises to the cytoplasm. The enzyme catalyses L-aspartate + H(+) = beta-alanine + CO2. The protein operates within cofactor biosynthesis; (R)-pantothenate biosynthesis; beta-alanine from L-aspartate: step 1/1. Catalyzes the pyruvoyl-dependent decarboxylation of aspartate to produce beta-alanine. The sequence is that of Aspartate 1-decarboxylase from Streptomyces avermitilis (strain ATCC 31267 / DSM 46492 / JCM 5070 / NBRC 14893 / NCIMB 12804 / NRRL 8165 / MA-4680).